The chain runs to 169 residues: Metallopeptidase ImmA (169 aa).

His-75 serves as a coordination point for Zn(2+). Residue Glu-76 is part of the active site. Zn(2+) is bound at residue His-79.

Interacts with ImmR.

Its function is as follows. Involved in the regulation of horizontal gene transfer through the integrative and conjugative element ICEBs1. Required for degradation of the ICEBs1 repressor protein ImmR/YdcN. The polypeptide is Metallopeptidase ImmA (immA) (Bacillus subtilis (strain 168)).